A 214-amino-acid polypeptide reads, in one-letter code: Peptide methionine sulfoxide reductase B1, chloroplastic (214 aa).

The transit peptide at 1–53 directs the protein to the chloroplast; the sequence is MAMRQYAAATAASSSFRARPRARPSCLPAAALPLAPCCGVAWSRASYRRASVR. Positions 58 to 81 are enriched in low complexity; it reads ASSSSSSSSSSPSPQGQAQAQAQG. The disordered stretch occupies residues 58-91; sequence ASSSSSSSSSSPSPQGQAQAQAQGKPNYSTSLTD. One can recognise a MsrB domain in the interval 91 to 213; it reads DEEWRKRLTK…NSASLKLKKT (123 aa). Zn(2+) is bound by residues Cys130, Cys133, Cys179, and Cys182. Cys202 (nucleophile) is an active-site residue.

The protein belongs to the MsrB Met sulfoxide reductase family. Requires Zn(2+) as cofactor. In terms of tissue distribution, expressed in leaves and flowers.

Its subcellular location is the plastid. It is found in the chloroplast. The enzyme catalyses L-methionyl-[protein] + [thioredoxin]-disulfide + H2O = L-methionyl-(R)-S-oxide-[protein] + [thioredoxin]-dithiol. Its function is as follows. Catalyzes the reduction of methionine sulfoxide (MetSO) to methionine in proteins. Involved in abiotic stress response. Plays a protective role against oxidative stress by restoring activity to proteins that have been inactivated by methionine oxidation. MSRB family specifically reduces the MetSO R-enantiomer. The sequence is that of Peptide methionine sulfoxide reductase B1, chloroplastic from Oryza sativa subsp. japonica (Rice).